A 125-amino-acid chain; its full sequence is Kappa-casein (125 aa).

The interval 42–63 (LPNIDPPTVERRPRPRPSFIAI) is disordered. Thr97 is a glycosylation site (O-linked (GalNAc...) threonine). Ser104 is modified (phosphoserine; alternate). A glycan (O-linked (GalNAc...) serine; alternate) is linked at Ser104. O-linked (GalNAc...) threonine glycosylation occurs at Thr121. A Phosphoserine modification is found at Ser122.

This sequence belongs to the kappa-casein family. In terms of tissue distribution, mammary gland specific. Secreted in milk.

The protein localises to the secreted. Its function is as follows. Kappa-casein stabilizes micelle formation, preventing casein precipitation in milk. The polypeptide is Kappa-casein (CSN3) (Lama guanicoe (Guanaco)).